The sequence spans 27 residues: Palustrin-1d (27 aa).

A disulfide bridge links C21 with C27.

As to expression, expressed by the skin glands.

The protein localises to the secreted. Functionally, antimicrobial activity against Gram-negative bacterium E.coli. The chain is Palustrin-1d from Lithobates palustris (Pickerel frog).